Reading from the N-terminus, the 23-residue chain is Acidic phospholipase A2 CTs-A1 (23 aa).

Ca(2+) is required as a cofactor. In terms of processing, contains 7 disulfide bonds. Expressed by the venom gland.

Its subcellular location is the secreted. It catalyses the reaction a 1,2-diacyl-sn-glycero-3-phosphocholine + H2O = a 1-acyl-sn-glycero-3-phosphocholine + a fatty acid + H(+). Snake venom phospholipase A2 (PLA2) that shows a moderate inhibition of ADP-induced human platelet aggregation when tested on platelet rich plasma. Exhibits moderate hydrolytic activities and prefers the anionic micelles (dPPC with deoxycholate) to the zwitterionic micelles (dPPC with Triton X-100). PLA2 catalyzes the calcium-dependent hydrolysis of the 2-acyl groups in 3-sn-phosphoglycerides. The protein is Acidic phospholipase A2 CTs-A1 of Trimeresurus stejnegeri (Chinese green tree viper).